Here is a 485-residue protein sequence, read N- to C-terminus: Glycogen synthase (485 aa).

Lys21 lines the ADP-alpha-D-glucose pocket.

The protein belongs to the glycosyltransferase 1 family. Bacterial/plant glycogen synthase subfamily.

It carries out the reaction [(1-&gt;4)-alpha-D-glucosyl](n) + ADP-alpha-D-glucose = [(1-&gt;4)-alpha-D-glucosyl](n+1) + ADP + H(+). Its pathway is glycan biosynthesis; glycogen biosynthesis. Its function is as follows. Synthesizes alpha-1,4-glucan chains using ADP-glucose. The protein is Glycogen synthase of Pseudomonas savastanoi pv. phaseolicola (strain 1448A / Race 6) (Pseudomonas syringae pv. phaseolicola (strain 1448A / Race 6)).